A 287-amino-acid chain; its full sequence is MTYTTRQIGAKNTLEYKVYIEKDGKPVSAFHDIPLYADKENNIFNMVVEIPRWTNAKLEITKEETLNPIIQDTKKGKLRFVRNCFPHHGYIHNYGAFPQTWEDPNVSHPETKAVGDNDPIDVLEIGETIAYTGQVKQVKALGIMALLDEGETDWKVIAIDINDPLAPKLNDIEDVEKYFPGLLRATNEWFRIYKIPDGKPENQFAFSGEAKNKKYALDIIKETHDSWKQLIAGKSSDSKGIDLTNVTLPDTPTYSKAASDAIPPASPKADAPIDKSIDKWFFISGSV.

Position 65 is a phosphothreonine (Thr-65). Arg-79 contacts diphosphate. Tyr-90 functions as the Proton donor in the catalytic mechanism. Mg(2+) is bound by residues Asp-116, Asp-121, and Asp-153. Residue Lys-239 forms a Glycyl lysine isopeptide (Lys-Gly) (interchain with G-Cter in ubiquitin) linkage. A Phosphothreonine modification is found at Thr-251. The residue at position 266 (Ser-266) is a Phosphoserine. Residue Lys-279 forms a Glycyl lysine isopeptide (Lys-Gly) (interchain with G-Cter in ubiquitin) linkage. Ser-286 is modified (phosphoserine).

It belongs to the PPase family. Homodimer. Requires Mg(2+) as cofactor.

The protein resides in the cytoplasm. The enzyme catalyses diphosphate + H2O = 2 phosphate + H(+). The protein is Inorganic pyrophosphatase (IPP1) of Saccharomyces cerevisiae (strain ATCC 204508 / S288c) (Baker's yeast).